The following is a 499-amino-acid chain: Pleckstrin homology domain-containing family O member 2 (499 aa).

The span at 1-11 (MEEEGVKEGGQ) shows a compositional bias: basic and acidic residues. The disordered stretch occupies residues 1–21 (MEEEGVKEGGQRPRSAQTADK). The PH domain occupies 18 to 119 (TADKAGWIKK…WIKALNEGIN (102 aa)). Ser-167 carries the phosphoserine modification. A disordered region spans residues 170-419 (LSRLDLDVPD…RRRQPGEQLH (250 aa)). Residues 201 to 212 (RPPMPPAKPSPA) show a composition bias toward pro residues. The segment covering 229-238 (SAPAPVPASS) has biased composition (low complexity). 2 positions are modified to phosphoserine: Ser-237 and Ser-238. Over residues 246-258 (EDLETPVVEDSDS) the composition is skewed to acidic residues. Position 273 is a phosphoserine (Ser-273). Phosphothreonine is present on residues Thr-298 and Thr-311. 2 stretches are compositionally biased toward low complexity: residues 329–349 (EASG…GPAE) and 367–386 (AAGP…TLPP). Ser-399 carries the post-translational modification Phosphoserine. Positions 416–492 (EQLHRAQLEV…LREKRRELVT (77 aa)) form a coiled coil.

This is Pleckstrin homology domain-containing family O member 2 (PLEKHO2) from Bos taurus (Bovine).